We begin with the raw amino-acid sequence, 137 residues long: Chaperone protein YscB (137 aa).

As to quaternary structure, interacts with SycN to form a complex which specifically binds to YopN.

The protein resides in the cytoplasm. It localises to the cell inner membrane. Functionally, functions as a specific chaperone for YopN. It could facilitate the secretion and the subsequent translocation of YopN. This is Chaperone protein YscB (yscB) from Yersinia enterocolitica.